The chain runs to 222 residues: MPSLSKEAALVHDALVARGLETPLRPPMDELDNETRKSLIAGHMTEIMQLLNLDLSDDSLMETPHRIAKMYVDEIFAGLDYANFPKITLIENKMKVDEMVTVRDITLTSTCEHHFVTIDGKATVAYIPKDSVIGLSKINRIVQFFAQRPQVQERLTQQILTVLQTLLGTNNVAVSIDAVHYCVKARGIRDATSATTTTSLGGLFKSSQNTRQEFLRAVRHHP.

Residues cysteine 111, histidine 114, and cysteine 182 each contribute to the Zn(2+) site.

This sequence belongs to the GTP cyclohydrolase I family. Toroid-shaped homodecamer, composed of two pentamers of five dimers.

It carries out the reaction GTP + H2O = 7,8-dihydroneopterin 3'-triphosphate + formate + H(+). It participates in cofactor biosynthesis; 7,8-dihydroneopterin triphosphate biosynthesis; 7,8-dihydroneopterin triphosphate from GTP: step 1/1. This chain is GTP cyclohydrolase 1, found in Salmonella choleraesuis (strain SC-B67).